A 338-amino-acid polypeptide reads, in one-letter code: MRFWFVLLALLGKEIYAYENERNALNATAANKVCGLSTYLKGIAHRVNSESAVVTEKLSDLKMRSIQLQLSVMRNRVPSGEQDCKDIRTLLKTVLRNEFTFQQELEEMRNASALAAAAAGIAAGRLEEWIFVFAQAAGGSSQFCISVGTNIPAEYNNLQECFDGTIGPETLYKIEDSRVKESAQKSLQLHEVLSSISFSSLGAESIVEKGENRGCNLMRTADGGLLKDVCLNRNFTWGGGVLNFGYCVAGNLKIKGGEYGDVGSHDAVRWTEDPSKVSIFKDVIRLFARFQEVKNAVVKKIKTTVDELTKCIGQKEAELTNDQLYEEFEVIQKYLWFL.

Positions 1–17 (MRFWFVLLALLGKEIYA) are cleaved as a signal peptide. Asn26 and Asn110 each carry an N-linked (GlcNAc...) asparagine glycan. Cystine bridges form between Cys34/Cys161, Cys84/Cys311, Cys144/Cys215, and Cys230/Cys247. N-linked (GlcNAc...) asparagine glycosylation is present at Asn234.

In terms of assembly, heterodimer composed of ESAG6 and ESAG7. N-glycosylated. Glycosylation is dispensable for heterodimer formation and host transferrin binding.

The protein localises to the cell membrane. It is found in the flagellar pocket. Functionally, transferrin receptor subunit involved in receptor-mediated acquisition of iron from the environment by binding host TF/transferrin. The polypeptide is Transferrin receptor subunit ESAG7 (Trypanosoma brucei brucei).